Here is a 31-residue protein sequence, read N- to C-terminus: Photosystem II reaction center protein T (31 aa).

The helical transmembrane segment at 3–23 (ALVYTFLLISTLGIIFFGIFF) threads the bilayer.

This sequence belongs to the PsbT family. PSII is composed of 1 copy each of membrane proteins PsbA, PsbB, PsbC, PsbD, PsbE, PsbF, PsbH, PsbI, PsbJ, PsbK, PsbL, PsbM, PsbT, PsbY, PsbZ, Psb30/Ycf12, at least 3 peripheral proteins of the oxygen-evolving complex and a large number of cofactors. It forms dimeric complexes.

The protein resides in the plastid. It is found in the chloroplast thylakoid membrane. In terms of biological role, found at the monomer-monomer interface of the photosystem II (PS II) dimer, plays a role in assembly and dimerization of PSII. PSII is a light-driven water plastoquinone oxidoreductase, using light energy to abstract electrons from H(2)O, generating a proton gradient subsequently used for ATP formation. The sequence is that of Photosystem II reaction center protein T from Nephroselmis olivacea (Green alga).